A 72-amino-acid polypeptide reads, in one-letter code: Disintegrin sasaimin (72 aa).

A Disintegrin domain is found at 1–72 (EAGEECDCGA…SAGCPRNPFH (72 aa)). Intrachain disulfides connect Cys6/Cys21, Cys8/Cys16, Cys15/Cys38, Cys29/Cys35, Cys34/Cys59, and Cys47/Cys66. The Cell attachment site motif lies at 51–53 (RGD).

This sequence belongs to the venom metalloproteinase (M12B) family. P-II subfamily. P-IIa sub-subfamily. In terms of assembly, monomer. Expressed by the venom gland.

It is found in the secreted. Functionally, inhibits ADP- (IC(50)=66 nM) and collagen-induced (IC(50)=100 nM) aggregation of human platelets. In vitro, inhibits adhesion of endothelial cells to vitronectin, type-I collagen and, to a lower degree, fibronectin and laminin. In Cerrophidion sasai (Costa Rica montane pitviper), this protein is Disintegrin sasaimin.